Here is a 360-residue protein sequence, read N- to C-terminus: Phosphoserine aminotransferase (360 aa).

Arginine 41 is a binding site for L-glutamate. Pyridoxal 5'-phosphate-binding residues include tryptophan 101, threonine 152, aspartate 172, and glutamine 195. The residue at position 196 (lysine 196) is an N6-(pyridoxal phosphate)lysine. 237-238 (NT) is a pyridoxal 5'-phosphate binding site.

The protein belongs to the class-V pyridoxal-phosphate-dependent aminotransferase family. SerC subfamily. Homodimer. It depends on pyridoxal 5'-phosphate as a cofactor.

The protein resides in the cytoplasm. The catalysed reaction is O-phospho-L-serine + 2-oxoglutarate = 3-phosphooxypyruvate + L-glutamate. It carries out the reaction 4-(phosphooxy)-L-threonine + 2-oxoglutarate = (R)-3-hydroxy-2-oxo-4-phosphooxybutanoate + L-glutamate. Its pathway is amino-acid biosynthesis; L-serine biosynthesis; L-serine from 3-phospho-D-glycerate: step 2/3. It participates in cofactor biosynthesis; pyridoxine 5'-phosphate biosynthesis; pyridoxine 5'-phosphate from D-erythrose 4-phosphate: step 3/5. Its function is as follows. Catalyzes the reversible conversion of 3-phosphohydroxypyruvate to phosphoserine and of 3-hydroxy-2-oxo-4-phosphonooxybutanoate to phosphohydroxythreonine. This is Phosphoserine aminotransferase from Burkholderia lata (strain ATCC 17760 / DSM 23089 / LMG 22485 / NCIMB 9086 / R18194 / 383).